A 98-amino-acid polypeptide reads, in one-letter code: VQ motif-containing protein 1 (98 aa).

Residues 27–36 carry the VQ motif; sequence FKTIVQELTG.

In terms of assembly, interacts with WRKY33.

The protein localises to the nucleus. May modulate WRKY transcription factor activities. The chain is VQ motif-containing protein 1 from Arabidopsis thaliana (Mouse-ear cress).